The sequence spans 1295 residues: Serine protease sat autotransporter (1295 aa).

Positions 1–49 (MNKIYSLKYSAATGGLIAVSELAKRVSGKTNRKLVATMLSLAVAGTVNA) are cleaved as a signal peptide. The 250-residue stretch at 51 to 300 (NIDISNVWAR…TKYNDKLVSE (250 aa)) folds into the Peptidase S6 domain. Active-site charge relay system residues include histidine 121, aspartate 149, and serine 256. An Autotransporter domain is found at 1029–1295 (DINGESGAWA…AINANFRYSF (267 aa)).

Cleaved to release the mature protein from the outer membrane.

Its subcellular location is the periplasm. The protein localises to the secreted. It is found in the cell surface. The protein resides in the cell outer membrane. With respect to regulation, inhibited by phenylmethylsulfonyl fluoride and Pefabloc. In terms of biological role, shows serine protease activity and displays cytophatic activity, including elongation, rounding, and detachment of a proportion of the cells from monolayer in culture. Triggers vacuolation within the cytoplasm of the human bladder and kidney cells. The protein is Serine protease sat autotransporter (sat) of Escherichia coli O6:H1 (strain CFT073 / ATCC 700928 / UPEC).